The chain runs to 259 residues: Ribosomal RNA small subunit methyltransferase A (259 aa).

S-adenosyl-L-methionine contacts are provided by Asn13, Leu15, Gly39, Glu60, Asp84, and Asn101.

It belongs to the class I-like SAM-binding methyltransferase superfamily. rRNA adenine N(6)-methyltransferase family. RsmA subfamily.

The protein resides in the cytoplasm. It catalyses the reaction adenosine(1518)/adenosine(1519) in 16S rRNA + 4 S-adenosyl-L-methionine = N(6)-dimethyladenosine(1518)/N(6)-dimethyladenosine(1519) in 16S rRNA + 4 S-adenosyl-L-homocysteine + 4 H(+). In terms of biological role, specifically dimethylates two adjacent adenosines (A1518 and A1519) in the loop of a conserved hairpin near the 3'-end of 16S rRNA in the 30S particle. May play a critical role in biogenesis of 30S subunits. This is Ribosomal RNA small subunit methyltransferase A from Mesomycoplasma hyopneumoniae (strain J / ATCC 25934 / NCTC 10110) (Mycoplasma hyopneumoniae).